A 206-amino-acid chain; its full sequence is Peptidyl-tRNA hydrolase (206 aa).

Y19 contributes to the tRNA binding site. The active-site Proton acceptor is the H24. Residues Y70, N72, and N118 each contribute to the tRNA site.

This sequence belongs to the PTH family. In terms of assembly, monomer.

Its subcellular location is the cytoplasm. It carries out the reaction an N-acyl-L-alpha-aminoacyl-tRNA + H2O = an N-acyl-L-amino acid + a tRNA + H(+). In terms of biological role, hydrolyzes ribosome-free peptidyl-tRNAs (with 1 or more amino acids incorporated), which drop off the ribosome during protein synthesis, or as a result of ribosome stalling. Catalyzes the release of premature peptidyl moieties from peptidyl-tRNA molecules trapped in stalled 50S ribosomal subunits, and thus maintains levels of free tRNAs and 50S ribosomes. In Prochlorococcus marinus (strain MIT 9313), this protein is Peptidyl-tRNA hydrolase.